A 105-amino-acid polypeptide reads, in one-letter code: Putative membrane protein insertion efficiency factor (105 aa).

Belongs to the UPF0161 family.

It localises to the cell membrane. Functionally, could be involved in insertion of integral membrane proteins into the membrane. This Bifidobacterium longum (strain NCC 2705) protein is Putative membrane protein insertion efficiency factor.